The primary structure comprises 92 residues: MRLFIFLLVAVLLLFQYDFWFGKNGYLDYKRTAQQIAQHKQENEKLSQRNQVVAAEIKDLKQGVEAIEERARFQHDMVKPDEIFYHIVKEQK.

The Cytoplasmic segment spans residues 1–3 (MRL). A helical membrane pass occupies residues 4–21 (FIFLLVAVLLLFQYDFWF). The Periplasmic segment spans residues 22–92 (GKNGYLDYKR…IFYHIVKEQK (71 aa)). Positions 26 to 74 (YLDYKRTAQQIAQHKQENEKLSQRNQVVAAEIKDLKQGVEAIEERARFQ) form a coiled coil.

It belongs to the FtsB family. In terms of assembly, part of a complex composed of FtsB, FtsL and FtsQ.

It is found in the cell inner membrane. Functionally, essential cell division protein. May link together the upstream cell division proteins, which are predominantly cytoplasmic, with the downstream cell division proteins, which are predominantly periplasmic. In Pasteurella multocida (strain Pm70), this protein is Cell division protein FtsB.